We begin with the raw amino-acid sequence, 88 residues long: Small ribosomal subunit protein bS20 (88 aa).

A disordered region spans residues 1-27 (MANTKQAQKRARQAEQRRQHNASQRSM).

It belongs to the bacterial ribosomal protein bS20 family.

In terms of biological role, binds directly to 16S ribosomal RNA. In Chromohalobacter salexigens (strain ATCC BAA-138 / DSM 3043 / CIP 106854 / NCIMB 13768 / 1H11), this protein is Small ribosomal subunit protein bS20.